The following is a 269-amino-acid chain: MGLHRDEATAMETLFRVSLRLLPVSAAVTCRSIRFPVSRPGSSHLLNRKLYNLPTSSSSSLSTKAGWLLGLGEKKKKVDLPEIVASGDPVLHEKAREVDPGEIGSERIQKIIDDMIKVMRLAPGVGLAAPQIGVPLRIIVLEDTKEYISYAPKEEILAQERRHFDLMVMVNPVLKERSNKKALFFEGCLSVDGFRAAVERYLEVVVTGYDRQGKRIEVNASGWQARILQHECDHLDGNLYVDKMVPRTFRTVDNLDLPLAEGCPKLGPQ.

The transit peptide at 1–60 directs the protein to the chloroplast and mitochondrion; sequence MGLHRDEATAMETLFRVSLRLLPVSAAVTCRSIRFPVSRPGSSHLLNRKLYNLPTSSSSS. Substrate is bound by residues 123-126 and Gly187; that span reads PGVG. Cys188 is a Zn(2+) binding site. The interval 191–196 is dimerization; that stretch reads VDGFRA. His230 serves as a coordination point for Zn(2+). Glu231 is an active-site residue. A Zn(2+)-binding site is contributed by His234. Positions 236–254 are dimerization; the sequence is DGNLYVDKMVPRTFRTVDN.

This sequence belongs to the polypeptide deformylase family. As to quaternary structure, homodimer. Zn(2+) serves as cofactor. As to expression, expressed in roots, leaves, flowers and siliques.

The protein resides in the plastid. Its subcellular location is the chloroplast stroma. It localises to the mitochondrion. It carries out the reaction N-terminal N-formyl-L-methionyl-[peptide] + H2O = N-terminal L-methionyl-[peptide] + formate. With respect to regulation, inhibited by actinonin. Functionally, removes the formyl group from the N-terminal Met of newly synthesized proteins. This chain is Peptide deformylase 1A, chloroplastic/mitochondrial (PDF1A), found in Arabidopsis thaliana (Mouse-ear cress).